Consider the following 316-residue polypeptide: MPQNVVLPGPAPWGFRLSGGIDFNQPLVITRITPGSKAAAANLCPGDVILAIDGFGTESMTHADAQDRIKAASYQLCLKIDRAETRLWSPQVSEDGKAHPFKINLEAEPQEFKPIGTAHNRRAQPFVAAANIDDKRQVVSASYNSPIGLYSTSNIQDALHGQLRGLIPGSLQNEPTASVPPQSDVYRMLHDNRDDPAAPRQSGSFRVLQDLVNDGPDDRPAGTRSVRAPVTKVHGGAGSAQRMPLCDKCGSGIVGAVVKARDKYRHPECFVCADCNLNLKQKGYFFVEGELYCETHARARTRPPEGYDTVTLYPKA.

One can recognise a PDZ domain in the interval 1-84 (MPQNVVLPGP…QLCLKIDRAE (84 aa)). A phosphoserine mark is found at Ser-18 and Ser-93. The residue at position 164 (Arg-164) is an Omega-N-methylarginine. The LIM zinc-binding domain occupies 244-303 (PLCDKCGSGIVGAVVKARDKYRHPECFVCADCNLNLKQKGYFFVEGELYCETHARARTRP).

In terms of assembly, interacts with ACTN2. Forms a heterodimer with PDLIM4 (via LIM domain).

Its subcellular location is the cytoplasm. The protein localises to the myofibril. It localises to the sarcomere. It is found in the z line. Its function is as follows. May play a role in the organization of actin filament arrays within muscle cells. This Mus musculus (Mouse) protein is PDZ and LIM domain protein 3 (Pdlim3).